A 108-amino-acid polypeptide reads, in one-letter code: Protein YcgL (108 aa).

Residues 12–96 enclose the YcgL domain; sequence MFCVIYRSSK…PPEDLLKQHL (85 aa).

This Escherichia coli (strain K12 / MC4100 / BW2952) protein is Protein YcgL.